The primary structure comprises 223 residues: Glutathione S-transferase Z2 (223 aa).

The GST N-terminal domain maps to 10–91; it reads AKLKLYSYWR…YLDDKYPEPP (82 aa). Glutathione-binding positions include 20-21, 20-25, glutamine 49, 49-50, 62-63, valine 63, 75-76, glutamine 115, and 119-121; these read SS, SSCAHR, QS, TV, DS, and NMA. The GST C-terminal domain occupies 96 to 221; it reads DYHKRAVNYQ…VPEKQPDTPS (126 aa).

Belongs to the GST superfamily. Zeta family.

The protein localises to the cytoplasm. It localises to the cytosol. The catalysed reaction is RX + glutathione = an S-substituted glutathione + a halide anion + H(+). In terms of biological role, may be involved in the conjugation of reduced glutathione to a wide number of exogenous and endogenous hydrophobic electrophiles and have a detoxification role against certain herbicides. The protein is Glutathione S-transferase Z2 (GSTZ2) of Arabidopsis thaliana (Mouse-ear cress).